Consider the following 175-residue polypeptide: DPY30 domain-containing protein 1 (175 aa).

Residues 94 to 112 are compositionally biased toward basic and acidic residues; that stretch reads QQKEKQKSEDFETGQEKSF. Disordered stretches follow at residues 94–134 and 152–175; these read QQKE…QAEE and APNL…SAPP.

This sequence belongs to the dpy-30 family. Component of the axonemal radial spoke complex 1 (RS1), at least composed of spoke head proteins RSPH1, RSPH3, RSPH9 and the cilia-specific component RSPH4A or sperm-specific component RSPH6A, spoke stalk proteins RSPH14, DNAJB13, DYDC1, ROPN1L and NME5, and the anchor protein IQUB. Interacts with SH3GL3.

It localises to the cytoplasm. Its subcellular location is the cytoskeleton. It is found in the flagellum axoneme. Functions as part of axonemal radial spoke complexes that play an important part in the motility of sperm and cilia. Plays a crucial role during acrosome biogenesis. The sequence is that of DPY30 domain-containing protein 1 (Dydc1) from Mus musculus (Mouse).